A 311-amino-acid chain; its full sequence is Malate dehydrogenase (311 aa).

Residues 7–13 and Asp-34 contribute to the NAD(+) site; that span reads GAAGGIG. Positions 81 and 87 each coordinate substrate. NAD(+) is bound by residues Asn-94 and 117 to 119; that span reads ITN. Substrate contacts are provided by Asn-119 and Arg-153. The active-site Proton acceptor is His-177. An NAD(+)-binding site is contributed by Met-227.

It belongs to the LDH/MDH superfamily. MDH type 1 family. Homodimer.

The catalysed reaction is (S)-malate + NAD(+) = oxaloacetate + NADH + H(+). In terms of biological role, catalyzes the reversible oxidation of malate to oxaloacetate. The chain is Malate dehydrogenase from Shewanella denitrificans (strain OS217 / ATCC BAA-1090 / DSM 15013).